We begin with the raw amino-acid sequence, 402 residues long: Diaminopimelate decarboxylase (402 aa).

K61 carries the post-translational modification N6-(pyridoxal phosphate)lysine. Pyridoxal 5'-phosphate-binding positions include G233 and 269 to 272; that span reads EPGR. 5 residues coordinate substrate: R272, R304, Y308, E334, and Y360. Y360 is a pyridoxal 5'-phosphate binding site.

The protein belongs to the Orn/Lys/Arg decarboxylase class-II family. LysA subfamily. In terms of assembly, homodimer. The cofactor is pyridoxal 5'-phosphate.

The enzyme catalyses meso-2,6-diaminopimelate + H(+) = L-lysine + CO2. It functions in the pathway amino-acid biosynthesis; L-lysine biosynthesis via DAP pathway; L-lysine from DL-2,6-diaminopimelate: step 1/1. Its function is as follows. Specifically catalyzes the decarboxylation of meso-diaminopimelate (meso-DAP) to L-lysine. In Thermoplasma acidophilum (strain ATCC 25905 / DSM 1728 / JCM 9062 / NBRC 15155 / AMRC-C165), this protein is Diaminopimelate decarboxylase.